The chain runs to 127 residues: Small ribosomal subunit protein uS13 (127 aa).

It belongs to the universal ribosomal protein uS13 family. Part of the 30S ribosomal subunit. Forms a loose heterodimer with protein S19. Forms two bridges to the 50S subunit in the 70S ribosome.

In terms of biological role, located at the top of the head of the 30S subunit, it contacts several helices of the 16S rRNA. In the 70S ribosome it contacts the 23S rRNA (bridge B1a) and protein L5 of the 50S subunit (bridge B1b), connecting the 2 subunits; these bridges are implicated in subunit movement. Contacts the tRNAs in the A and P-sites. In Pelagibacter ubique (strain HTCC1062), this protein is Small ribosomal subunit protein uS13.